An 81-amino-acid chain; its full sequence is Photosystem I iron-sulfur center (81 aa).

2 consecutive 4Fe-4S ferredoxin-type domains span residues 2–31 (AHTV…MVPW) and 39–68 (MASA…IRVY). [4Fe-4S] cluster-binding residues include cysteine 11, cysteine 14, cysteine 17, cysteine 21, cysteine 48, cysteine 51, cysteine 54, and cysteine 58.

As to quaternary structure, the eukaryotic PSI reaction center is composed of at least 11 subunits. The cofactor is [4Fe-4S] cluster.

The protein resides in the plastid. Its subcellular location is the chloroplast thylakoid membrane. It carries out the reaction reduced [plastocyanin] + hnu + oxidized [2Fe-2S]-[ferredoxin] = oxidized [plastocyanin] + reduced [2Fe-2S]-[ferredoxin]. Its function is as follows. Apoprotein for the two 4Fe-4S centers FA and FB of photosystem I (PSI); essential for photochemical activity. FB is the terminal electron acceptor of PSI, donating electrons to ferredoxin. The C-terminus interacts with PsaA/B/D and helps assemble the protein into the PSI complex. Required for binding of PsaD and PsaE to PSI. PSI is a plastocyanin/cytochrome c6-ferredoxin oxidoreductase, converting photonic excitation into a charge separation, which transfers an electron from the donor P700 chlorophyll pair to the spectroscopically characterized acceptors A0, A1, FX, FA and FB in turn. The chain is Photosystem I iron-sulfur center from Cyanidioschyzon merolae (strain NIES-3377 / 10D) (Unicellular red alga).